Reading from the N-terminus, the 144-residue chain is Large ribosomal subunit protein uL15 (144 aa).

Positions 1-51 (MKLNELKPATGSRSKRLRKGRGLSSGHGFTSGRGTKGQKAHGKTRLGFEGG) are disordered. Over residues 23-35 (LSSGHGFTSGRGT) the composition is skewed to gly residues.

It belongs to the universal ribosomal protein uL15 family. Part of the 50S ribosomal subunit.

Its function is as follows. Binds to the 23S rRNA. This is Large ribosomal subunit protein uL15 from Limosilactobacillus reuteri (strain DSM 20016) (Lactobacillus reuteri).